We begin with the raw amino-acid sequence, 403 residues long: Deubiquitinase and deneddylase Dub1 (403 aa).

The segment covering 1 to 11 (MLSPTNSTSKT) has biased composition (polar residues). Positions 1-24 (MLSPTNSTSKTAPVPPRDSSKPVL) are disordered. The helical transmembrane segment at 40–60 (TALAVLLVVVTLGLILLFYSF) threads the bilayer. The disordered stretch occupies residues 77 to 132 (KEQPTISIPVPLPSPPLAVPRPSTPPAPTPAISRPSTPSAPKPSTPPPLLPKAPKP). Composition is skewed to pro residues over residues 86–105 (VPLP…PAPT) and 114–130 (PSAP…PKAP). Active-site residues include histidine 277, aspartate 294, and cysteine 347.

This sequence belongs to the peptidase C48 family.

Its subcellular location is the secreted. The protein resides in the host cell. It is found in the membrane. Functionally, effector proteins function to alter host cell physiology and promote bacterial survival in host tissues. This protease possesses deubiquitinating and deneddylating activities. In Chlamydia trachomatis serovar L2b (strain UCH-1/proctitis), this protein is Deubiquitinase and deneddylase Dub1 (cdu1).